The primary structure comprises 374 residues: Carbamoyl phosphate synthase small chain (374 aa).

The segment at 1 to 183 (MVLADGQMIW…QNGYSVVDNQ (183 aa)) is CPSase. Residues serine 41, glycine 235, and glycine 237 each coordinate L-glutamine. The Glutamine amidotransferase type-1 domain maps to 187–374 (HVVAIDYGLK…FIDLIAKERP (188 aa)). The Nucleophile role is filled by cysteine 264. Leucine 265, glutamine 268, asparagine 306, glycine 308, and phenylalanine 309 together coordinate L-glutamine. Catalysis depends on residues histidine 348 and glutamate 350.

It belongs to the CarA family. Composed of two chains; the small (or glutamine) chain promotes the hydrolysis of glutamine to ammonia, which is used by the large (or ammonia) chain to synthesize carbamoyl phosphate. Tetramer of heterodimers (alpha,beta)4.

The enzyme catalyses hydrogencarbonate + L-glutamine + 2 ATP + H2O = carbamoyl phosphate + L-glutamate + 2 ADP + phosphate + 2 H(+). It catalyses the reaction L-glutamine + H2O = L-glutamate + NH4(+). The protein operates within amino-acid biosynthesis; L-arginine biosynthesis; carbamoyl phosphate from bicarbonate: step 1/1. It functions in the pathway pyrimidine metabolism; UMP biosynthesis via de novo pathway; (S)-dihydroorotate from bicarbonate: step 1/3. Functionally, small subunit of the glutamine-dependent carbamoyl phosphate synthetase (CPSase). CPSase catalyzes the formation of carbamoyl phosphate from the ammonia moiety of glutamine, carbonate, and phosphate donated by ATP, constituting the first step of 2 biosynthetic pathways, one leading to arginine and/or urea and the other to pyrimidine nucleotides. The small subunit (glutamine amidotransferase) binds and cleaves glutamine to supply the large subunit with the substrate ammonia. The sequence is that of Carbamoyl phosphate synthase small chain from Zymomonas mobilis subsp. mobilis (strain ATCC 31821 / ZM4 / CP4).